The following is a 105-amino-acid chain: Large ribosomal subunit protein uL24 (105 aa).

This sequence belongs to the universal ribosomal protein uL24 family. Part of the 50S ribosomal subunit.

Its function is as follows. One of two assembly initiator proteins, it binds directly to the 5'-end of the 23S rRNA, where it nucleates assembly of the 50S subunit. Functionally, one of the proteins that surrounds the polypeptide exit tunnel on the outside of the subunit. The sequence is that of Large ribosomal subunit protein uL24 from Psychrobacter arcticus (strain DSM 17307 / VKM B-2377 / 273-4).